Reading from the N-terminus, the 101-residue chain is Acylphosphatase (101 aa).

The Acylphosphatase-like domain maps to 12–98; it reads RVHVFVTGRV…EGLRGFEVKR (87 aa). Residues R27 and N45 contribute to the active site.

This sequence belongs to the acylphosphatase family.

The enzyme catalyses an acyl phosphate + H2O = a carboxylate + phosphate + H(+). The protein is Acylphosphatase (acyP) of Trichormus variabilis (strain ATCC 29413 / PCC 7937) (Anabaena variabilis).